A 392-amino-acid chain; its full sequence is O-phospho-L-seryl-tRNA:Cys-tRNA synthase (392 aa).

Pyridoxal 5'-phosphate-binding positions include 84 to 85, N191, and 214 to 216; these read AR and SGH. K217 carries the N6-(pyridoxal phosphate)lysine modification.

Belongs to the SepCysS family. Homodimer. Interacts with SepRS. Pyridoxal 5'-phosphate serves as cofactor.

The catalysed reaction is O-phospho-L-seryl-tRNA(Cys) + hydrogen sulfide + H(+) = L-cysteinyl-tRNA(Cys) + phosphate. Functionally, converts O-phospho-L-seryl-tRNA(Cys) (Sep-tRNA(Cys)) to L-cysteinyl-tRNA(Cys) (Cys-tRNA(Cys)). The chain is O-phospho-L-seryl-tRNA:Cys-tRNA synthase from Methanopyrus kandleri (strain AV19 / DSM 6324 / JCM 9639 / NBRC 100938).